Consider the following 88-residue polypeptide: Small ribosomal subunit protein bS16c (88 aa).

The protein belongs to the bacterial ribosomal protein bS16 family.

It localises to the plastid. Its subcellular location is the chloroplast. This chain is Small ribosomal subunit protein bS16c, found in Jasminum nudiflorum (Winter jasmine).